The primary structure comprises 3993 residues: Intermembrane lipid transfer protein VPS13B (3993 aa).

The 101-residue stretch at 2–102 folds into the Chorein N-terminal domain; the sequence is LESYVTPILM…KDGIQDDHES (101 aa). Positions 100 to 133 are disordered; the sequence is HESCGSNSTNRSTAENTKSSIKPRRIQQAAPADP. The span at 103-119 shows a compositional bias: polar residues; that stretch reads CGSNSTNRSTAENTKSS. Phosphoserine occurs at positions 413, 998, 1001, and 1032. Disordered regions lie at residues 1262–1303, 1616–1637, and 1735–1770; these read SPVW…PFSD, DQLK…ERNS, and TKAT…DSGI. Positions 1264–1291 are enriched in polar residues; it reads VWSSVGTAPPDTSTCSPSADIGTTTEGD. Residues 1739 to 1750 show a composition bias toward basic and acidic residues; that stretch reads EISKQEQKKVDT. The span at 1756-1770 shows a compositional bias: polar residues; sequence AETSSRYSGAQDSGI. Ser-1789 is modified (phosphoserine). The segment at 2048–2067 is disordered; that stretch reads HSSAHSKETSTPSDSILNMD. The SHR-BD domain occupies 2604–2683; that stretch reads HFVICNDTQE…TIQYKGRTAS (80 aa). A localizes the protein to the Golgi apparatus region spans residues 3880-3993; it reads AFPITEISCA…KNKALRKGFS (114 aa).

The protein belongs to the VPS13 family. Interacts with STX6. Interacts with STX12 (via N-terminus). Interacts with RAB6A isoform 1 (GTP-bound) and isoform 2 (GTP-bound). Interacts with RAB6B (GTP-bound). As to expression, ubiquitously expressed in all examined tissues.

The protein localises to the recycling endosome membrane. Its subcellular location is the cytoplasmic vesicle. The protein resides in the secretory vesicle. It is found in the acrosome membrane. It localises to the golgi apparatus. The protein localises to the cis-Golgi network membrane. Its subcellular location is the endoplasmic reticulum-Golgi intermediate compartment membrane. The protein resides in the trans-Golgi network membrane. It is found in the early endosome membrane. It localises to the lysosome membrane. Functionally, mediates the transfer of lipids between membranes at organelle contact sites. Binds phosphatidylinositol 3-phosphate. Functions as a tethering factor in the slow endocytic recycling pathway, to assist traffic between early and recycling endosomes. Involved in the transport of proacrosomal vesicles to the nuclear dense lamina (NDL) during spermatid development. Plays a role in the assembly of the Golgi apparatus, possibly by mediating trafficking to the Golgi membrane. Plays a role in the development of the nervous system, and may be required for neuron projection development. May also play a role during adipose tissue development. Required for maintenance of the ocular lens. Required for proper organization of the Golgi. The polypeptide is Intermembrane lipid transfer protein VPS13B (Mus musculus (Mouse)).